The following is a 135-amino-acid chain: MADNFNFELVSPERLLLSEMVTEVVIPATEGEMTVMAHHAPTMTTIKPGVVSVRSASGKKQDYVVFGGFADILPTGCTLLAESAVPVEELHKDELTRRIEAARKELEDTELHEHKSKLEHFIMELTHLRGVVQQD.

Belongs to the ATPase epsilon chain family. F-type ATPases have 2 components, CF(1) - the catalytic core - and CF(0) - the membrane proton channel. CF(1) has five subunits: alpha(3), beta(3), gamma(1), delta(1), epsilon(1). CF(0) has three main subunits: a, b and c.

Its subcellular location is the cell inner membrane. In terms of biological role, produces ATP from ADP in the presence of a proton gradient across the membrane. In Rhizobium leguminosarum bv. trifolii (strain WSM2304), this protein is ATP synthase epsilon chain.